Here is a 308-residue protein sequence, read N- to C-terminus: Putative T-box protein 30/42 (308 aa).

The segment at residues 11–192 is a DNA-binding region (T-box); it reads MSNEELWKER…KHSTFGNRSE (182 aa). Residues 186–220 form a disordered region; sequence TFGNRSEGGIKRKTSDAAGQLPSKRSSKKPVKKDV.

It is found in the nucleus. In terms of biological role, involved in the regulatory network to control embryonic patterning and morphogenesis. Implicated in negatively regulating vab-7 expression at the anterior of embryos. The polypeptide is Putative T-box protein 30/42 (tbx-30) (Caenorhabditis elegans).